The chain runs to 374 residues: CMP-N-acetylneuraminate-beta-1,4-galactoside alpha-2,3-sialyltransferase (374 aa).

Residues 1-8 (MGLLVFVR) lie on the Cytoplasmic side of the membrane. A helical; Signal-anchor for type II membrane protein membrane pass occupies residues 9-28 (NLLLALCLFLVLGFLYYSAW). The Lumenal segment spans residues 29–374 (KLHLLQWEDS…RVITDLSSGI (346 aa)). Asn79 and Asn170 each carry an N-linked (GlcNAc...) asparagine glycan. Cys159 and Cys313 are disulfide-bonded.

Belongs to the glycosyltransferase 29 family. In terms of processing, the soluble form derives from the membrane form by proteolytic processing. In terms of tissue distribution, found in all tissues tested. High expression found in brain, liver, kidney, colon, heart and lung.

The protein resides in the golgi apparatus. It is found in the golgi stack membrane. The protein localises to the secreted. It catalyses the reaction a beta-D-galactosyl-(1-&gt;4)-N-acetyl-beta-D-glucosaminyl derivative + CMP-N-acetyl-beta-neuraminate = an N-acetyl-alpha-neuraminyl-(2-&gt;3)-beta-D-galactosyl-(1-&gt;4)-N-acetyl-beta-D-glucosaminyl derivative + CMP + H(+). Its pathway is protein modification; protein glycosylation. Its function is as follows. Catalyzes the formation of the NeuAc-alpha-2,3-Gal-beta-1,4-GlcNAc-, NeuAc-alpha-2,3-Gal-beta-1,3-GlcNAc- and NeuAc-alpha-2,3-Gal-beta-1,3-GalNAc- sequences found in terminal carbohydrate groups of glycoproteins and glycolipids. The highest activity is toward Gal-beta-1,3-GlcNAc and the lowest toward Gal-beta-1,3-GalNAc. The sequence is that of CMP-N-acetylneuraminate-beta-1,4-galactoside alpha-2,3-sialyltransferase (St3gal3) from Rattus norvegicus (Rat).